Consider the following 338-residue polypeptide: Ribosomal RNA small subunit methyltransferase H (338 aa).

S-adenosyl-L-methionine contacts are provided by residues 53-55 (GGH), Asp-72, Tyr-99, Asp-123, and Gln-130. Disordered regions lie at residues 276-297 (EITP…PGMG) and 304-323 (TRGA…RSAP).

This sequence belongs to the methyltransferase superfamily. RsmH family.

It localises to the cytoplasm. It catalyses the reaction cytidine(1402) in 16S rRNA + S-adenosyl-L-methionine = N(4)-methylcytidine(1402) in 16S rRNA + S-adenosyl-L-homocysteine + H(+). Specifically methylates the N4 position of cytidine in position 1402 (C1402) of 16S rRNA. This Rhodococcus jostii (strain RHA1) protein is Ribosomal RNA small subunit methyltransferase H.